Reading from the N-terminus, the 286-residue chain is 33 kDa chaperonin (286 aa).

2 cysteine pairs are disulfide-bonded: Cys225-Cys227 and Cys258-Cys261.

The protein belongs to the HSP33 family. Post-translationally, under oxidizing conditions two disulfide bonds are formed involving the reactive cysteines. Under reducing conditions zinc is bound to the reactive cysteines and the protein is inactive.

Its subcellular location is the cytoplasm. In terms of biological role, redox regulated molecular chaperone. Protects both thermally unfolding and oxidatively damaged proteins from irreversible aggregation. Plays an important role in the bacterial defense system toward oxidative stress. This chain is 33 kDa chaperonin, found in Shewanella woodyi (strain ATCC 51908 / MS32).